The following is a 323-amino-acid chain: tRNA uridine(34) hydroxylase (323 aa).

One can recognise a Rhodanese domain in the interval 127–221 (QDENTVVLDA…YGQDPEVQGD (95 aa)). The Cysteine persulfide intermediate role is filled by cysteine 181.

It belongs to the TrhO family.

It catalyses the reaction uridine(34) in tRNA + AH2 + O2 = 5-hydroxyuridine(34) in tRNA + A + H2O. In terms of biological role, catalyzes oxygen-dependent 5-hydroxyuridine (ho5U) modification at position 34 in tRNAs. The sequence is that of tRNA uridine(34) hydroxylase from Oceanobacillus iheyensis (strain DSM 14371 / CIP 107618 / JCM 11309 / KCTC 3954 / HTE831).